The chain runs to 402 residues: Ferredoxin--NADP reductase (402 aa).

The CpcD-like domain maps to 18–74 (NRLFIYEVVGLGGDGRNENSLVRKSGTTFITVPYARMNQEMQRITKLGGKIVSIRPA). A disordered region spans residues 80–101 (IVSEGQSSAQASAQSPMASSTK). The segment covering 85–99 (QSSAQASAQSPMASS) has biased composition (low complexity). Residues 120-245 (KTPFLGKCIE…TGPVGKEMLL (126 aa)) form the FAD-binding FR-type domain. Residues 179–182 (RLYS), 200–202 (CVR), Y206, 218–220 (VCS), and T260 contribute to the FAD site. Residues S182 and R202 each coordinate NADP(+). NADP(+) contacts are provided by residues T260, 292 to 293 (VP), 322 to 323 (SR), K332, 332 to 336 (KVYVQ), 361 to 362 (GL), and E400.

It belongs to the ferredoxin--NADP reductase type 1 family. FAD is required as a cofactor.

It localises to the cellular thylakoid membrane. It catalyses the reaction 2 reduced [2Fe-2S]-[ferredoxin] + NADP(+) + H(+) = 2 oxidized [2Fe-2S]-[ferredoxin] + NADPH. The protein is Ferredoxin--NADP reductase (petH) of Picosynechococcus sp. (strain ATCC 27264 / PCC 7002 / PR-6) (Agmenellum quadruplicatum).